A 485-amino-acid polypeptide reads, in one-letter code: UDP-N-acetylmuramoyl-L-alanyl-D-glutamate--2,6-diaminopimelate ligase (485 aa).

Residue serine 32 participates in UDP-N-acetyl-alpha-D-muramoyl-L-alanyl-D-glutamate binding. 111 to 117 is a binding site for ATP; the sequence is GTNGKTT. Residues 153-154, serine 180, and arginine 188 contribute to the UDP-N-acetyl-alpha-D-muramoyl-L-alanyl-D-glutamate site; that span reads TT. Lysine 220 carries the post-translational modification N6-carboxylysine. Meso-2,6-diaminopimelate is bound by residues arginine 382, 405–408, glycine 455, and glutamate 459; that span reads DNPR. A Meso-diaminopimelate recognition motif motif is present at residues 405-408; sequence DNPR.

The protein belongs to the MurCDEF family. MurE subfamily. Mg(2+) is required as a cofactor. In terms of processing, carboxylation is probably crucial for Mg(2+) binding and, consequently, for the gamma-phosphate positioning of ATP.

Its subcellular location is the cytoplasm. The catalysed reaction is UDP-N-acetyl-alpha-D-muramoyl-L-alanyl-D-glutamate + meso-2,6-diaminopimelate + ATP = UDP-N-acetyl-alpha-D-muramoyl-L-alanyl-gamma-D-glutamyl-meso-2,6-diaminopimelate + ADP + phosphate + H(+). It functions in the pathway cell wall biogenesis; peptidoglycan biosynthesis. Its function is as follows. Catalyzes the addition of meso-diaminopimelic acid to the nucleotide precursor UDP-N-acetylmuramoyl-L-alanyl-D-glutamate (UMAG) in the biosynthesis of bacterial cell-wall peptidoglycan. The polypeptide is UDP-N-acetylmuramoyl-L-alanyl-D-glutamate--2,6-diaminopimelate ligase (Chlamydia felis (strain Fe/C-56) (Chlamydophila felis)).